We begin with the raw amino-acid sequence, 141 residues long: Cystatin (141 aa).

The N-terminal stretch at 1–26 (MVHSQLPVAAPLRLLCALLLLPSATM) is a signal peptide. The Cystatin domain occupies 29 to 129 (GGLYPRSVTD…CHFQVWSRPW (101 aa)). The Secondary area of contact signature appears at 73 to 77 (QVVTG). 2 disulfides stabilise this stretch: Cys-91/Cys-107 and Cys-120/Cys-140.

Belongs to the cystatin family. Expressed by the venom gland at an extremely low level (at protein level).

It localises to the secreted. Inhibits various C1 cysteine proteases including cathepsin L, papain and cathepsin B. This protein has no toxic activity and its function in the venom is unknown. It may play a role as a housekeeping or regulatory protein. The polypeptide is Cystatin (Tropidechis carinatus (Australian rough-scaled snake)).